The following is a 178-amino-acid chain: Adenine phosphoribosyltransferase (178 aa).

The protein belongs to the purine/pyrimidine phosphoribosyltransferase family. As to quaternary structure, homodimer.

It is found in the cytoplasm. The enzyme catalyses AMP + diphosphate = 5-phospho-alpha-D-ribose 1-diphosphate + adenine. Its pathway is purine metabolism; AMP biosynthesis via salvage pathway; AMP from adenine: step 1/1. In terms of biological role, catalyzes a salvage reaction resulting in the formation of AMP, that is energically less costly than de novo synthesis. This chain is Adenine phosphoribosyltransferase, found in Bacteroides fragilis (strain YCH46).